Consider the following 115-residue polypeptide: U3-lycotoxin-Ls1q (115 aa).

The signal sequence occupies residues 1–20 (MKFVLLFGVLLVTLFSYSSA). Positions 21–44 (EMFDDFDQADEDELLSLIEKEEAR) are excised as a propeptide. Cystine bridges form between Cys48–Cys63, Cys55–Cys72, Cys62–Cys87, and Cys74–Cys85.

It belongs to the neurotoxin 19 (CSTX) family. 01 subfamily. In terms of tissue distribution, expressed by the venom gland.

Its subcellular location is the secreted. The sequence is that of U3-lycotoxin-Ls1q from Lycosa singoriensis (Wolf spider).